Here is a 307-residue protein sequence, read N- to C-terminus: Regulating synaptic membrane exocytosis protein 3 (307 aa).

The segment at 86-120 (STETGIAVEMRSRVTRQGSRESTDGSTNSNSSEGT) is disordered. Polar residues predominate over residues 109–119 (DGSTNSNSSEG). Positions 155–273 (PMGDVHIAIM…DLSAVVTGWY (119 aa)) constitute a C2 domain. Residues S294 and S297 each carry the phosphoserine modification.

As to quaternary structure, binds PPFIA3. Does not bind RAB3. Expressed exclusively in brain with significant levels in cortex, cerebellum and olfactory bulb. Detected at lower level in hippocampus.

Its subcellular location is the synapse. Regulates synaptic membrane exocytosis. The protein is Regulating synaptic membrane exocytosis protein 3 (Rims3) of Rattus norvegicus (Rat).